A 354-amino-acid polypeptide reads, in one-letter code: Ferrochelatase (354 aa).

Fe cation contacts are provided by His214 and Glu295.

It belongs to the ferrochelatase family.

The protein resides in the cytoplasm. It carries out the reaction heme b + 2 H(+) = protoporphyrin IX + Fe(2+). The protein operates within porphyrin-containing compound metabolism; protoheme biosynthesis; protoheme from protoporphyrin-IX: step 1/1. Its function is as follows. Catalyzes the ferrous insertion into protoporphyrin IX. The polypeptide is Ferrochelatase (Burkholderia ambifaria (strain ATCC BAA-244 / DSM 16087 / CCUG 44356 / LMG 19182 / AMMD) (Burkholderia cepacia (strain AMMD))).